The sequence spans 101 residues: NAD(P)H-quinone oxidoreductase subunit 4L, chloroplastic (101 aa).

3 consecutive transmembrane segments (helical) span residues 2 to 22 (ILEH…YGLI), 30 to 52 (ALMC…SDFF), and 61 to 81 (IFSI…LAIV).

The protein belongs to the complex I subunit 4L family. As to quaternary structure, NDH is composed of at least 16 different subunits, 5 of which are encoded in the nucleus.

Its subcellular location is the plastid. It localises to the chloroplast thylakoid membrane. The enzyme catalyses a plastoquinone + NADH + (n+1) H(+)(in) = a plastoquinol + NAD(+) + n H(+)(out). It carries out the reaction a plastoquinone + NADPH + (n+1) H(+)(in) = a plastoquinol + NADP(+) + n H(+)(out). In terms of biological role, NDH shuttles electrons from NAD(P)H:plastoquinone, via FMN and iron-sulfur (Fe-S) centers, to quinones in the photosynthetic chain and possibly in a chloroplast respiratory chain. The immediate electron acceptor for the enzyme in this species is believed to be plastoquinone. Couples the redox reaction to proton translocation, and thus conserves the redox energy in a proton gradient. The protein is NAD(P)H-quinone oxidoreductase subunit 4L, chloroplastic of Oenothera glazioviana (Large-flowered evening primrose).